Here is a 291-residue protein sequence, read N- to C-terminus: Cell division protein ZipA (291 aa).

Over 1 to 5 (MQELR) the chain is Periplasmic. The chain crosses the membrane as a helical span at residues 6 to 26 (FVLIIVGALAIAALLFHGLWT). Residues 27-291 (SKKEGKSKFG…QEFKVRAAQA (265 aa)) lie on the Cytoplasmic side of the membrane. A compositionally biased stretch (basic and acidic residues) spans 29 to 51 (KEGKSKFGDKPLRKMKVESDDPP). 2 disordered regions span residues 29 to 61 (KEGKSKFGDKPLRKMKVESDDPPSRAFAAEDDF) and 92 to 119 (ELDEEEDEEARIPVQPQSQPQPRKVQPQ).

The protein belongs to the ZipA family. Interacts with FtsZ via their C-terminal domains.

The protein localises to the cell inner membrane. Its function is as follows. Essential cell division protein that stabilizes the FtsZ protofilaments by cross-linking them and that serves as a cytoplasmic membrane anchor for the Z ring. Also required for the recruitment to the septal ring of downstream cell division proteins. The chain is Cell division protein ZipA from Vibrio cholerae serotype O1 (strain ATCC 39541 / Classical Ogawa 395 / O395).